The primary structure comprises 108 residues: UPF0060 membrane protein SH0717 (108 aa).

The next 4 helical transmembrane spans lie at 5-25 (IFIF…IWLW), 31-51 (SSWL…IATF), 60-80 (VYAA…YIVD), and 86-106 (KYDL…ILPS).

Belongs to the UPF0060 family.

The protein resides in the cell membrane. This is UPF0060 membrane protein SH0717 from Staphylococcus haemolyticus (strain JCSC1435).